The primary structure comprises 771 residues: Carnitine O-palmitoyltransferase 1, muscle isoform (771 aa).

Residues 1–47 (MAEAHQAVAFQFTVTPEGVDFQLSREVLKHIYLSVIRSWKKRLIRIK) lie on the Cytoplasmic side of the membrane. The chain crosses the membrane as a helical span at residues 48 to 73 (NGILRGVYPGSPTSWLVVVMATAGSS). The Mitochondrial intermembrane portion of the chain corresponds to 74–101 (YYNVDISMGLVYYIQRWLPEGRPYRTPY). Residues 102 to 121 (TRTLFSMAIFSTGVWMMGIF) traverse the membrane as a helical segment. Over 122–771 (FFRQTLKLLL…NLFQVPKADG (650 aa)) the chain is Cytoplasmic. The active-site Proton acceptor is the histidine 472. CoA is bound at residue 554–566 (GKGLIKKCRTSPD). (R)-carnitine-binding residues include tyrosine 588 and threonine 601.

This sequence belongs to the carnitine/choline acetyltransferase family.

Its subcellular location is the mitochondrion outer membrane. The catalysed reaction is (R)-carnitine + hexadecanoyl-CoA = O-hexadecanoyl-(R)-carnitine + CoA. Its pathway is lipid metabolism; fatty acid beta-oxidation. Functionally, catalyzes the transfer of the acyl group of long-chain fatty acid-CoA conjugates onto carnitine, an essential step for the mitochondrial uptake of long-chain fatty acids and their subsequent beta-oxidation in the mitochondrion. The polypeptide is Carnitine O-palmitoyltransferase 1, muscle isoform (CPT1B) (Bos taurus (Bovine)).